The chain runs to 302 residues: Sulfate adenylyltransferase subunit 2 (302 aa).

The disordered stretch occupies residues 280 to 302 (RQGRLIDSDQSASMEQKKRQGYF).

The protein belongs to the PAPS reductase family. CysD subfamily. In terms of assembly, heterodimer composed of CysD, the smaller subunit, and CysN.

The catalysed reaction is sulfate + ATP + H(+) = adenosine 5'-phosphosulfate + diphosphate. Its pathway is sulfur metabolism; hydrogen sulfide biosynthesis; sulfite from sulfate: step 1/3. Functionally, with CysN forms the ATP sulfurylase (ATPS) that catalyzes the adenylation of sulfate producing adenosine 5'-phosphosulfate (APS) and diphosphate, the first enzymatic step in sulfur assimilation pathway. APS synthesis involves the formation of a high-energy phosphoric-sulfuric acid anhydride bond driven by GTP hydrolysis by CysN coupled to ATP hydrolysis by CysD. In Shewanella baltica (strain OS223), this protein is Sulfate adenylyltransferase subunit 2.